The primary structure comprises 387 residues: Major outer membrane protein P.IA (387 aa).

An N-terminal signal peptide occupies residues 1-19 (MRKKLTALVLSALPLAAVA).

The protein belongs to the Gram-negative porin family. Homotrimer.

It is found in the cell outer membrane. In terms of biological role, serves as a slightly cation selective porin. Major antigen on the gonococcal cell surface and it may have pathogenic properties in addition to its porin activity. In Neisseria meningitidis serogroup C, this protein is Major outer membrane protein P.IA (porA).